The sequence spans 691 residues: ATP-dependent zinc metalloprotease FtsH 2 (691 aa).

The interval 1–48 (MTDEPQSDEQQTTEQERPLGTKRATRADGLRRPGVRSGLAERRSPAAD) is disordered. At 1 to 64 (MTDEPQSDEQ…AAVRRFLLRD (64 aa)) the chain is on the cytoplasmic side. Residues 14 to 31 (EQERPLGTKRATRADGLR) show a composition bias toward basic and acidic residues. The chain crosses the membrane as a helical span at residues 65 to 85 (VFALGLMIAALVIVILFFTLL). At 86 to 168 (GATKPTSSGT…AVKQQPGKAQ (83 aa)) the chain is on the extracellular side. Residues 169 to 189 (VTIVVQFLLPILLLVCLFALF) traverse the membrane as a helical segment. Residues 190 to 691 (MRIGQDGGAG…ERGSARDRDA (502 aa)) are Cytoplasmic-facing. 265 to 272 (GPPGTGKT) lines the ATP pocket. His-486 serves as a coordination point for Zn(2+). Residue Glu-487 is part of the active site. Residues His-490 and Asp-563 each contribute to the Zn(2+) site.

The protein in the central section; belongs to the AAA ATPase family. In the C-terminal section; belongs to the peptidase M41 family. As to quaternary structure, homohexamer. Requires Zn(2+) as cofactor.

Its subcellular location is the cell membrane. In terms of biological role, acts as a processive, ATP-dependent zinc metallopeptidase for both cytoplasmic and membrane proteins. Plays a role in the quality control of integral membrane proteins. This chain is ATP-dependent zinc metalloprotease FtsH 2, found in Conexibacter woesei (strain DSM 14684 / CCUG 47730 / CIP 108061 / JCM 11494 / NBRC 100937 / ID131577).